The primary structure comprises 258 residues: Acetylglutamate kinase (258 aa).

Residues G40–G41, R62, and N158 contribute to the substrate site.

The protein belongs to the acetylglutamate kinase family. ArgB subfamily.

The protein resides in the cytoplasm. It carries out the reaction N-acetyl-L-glutamate + ATP = N-acetyl-L-glutamyl 5-phosphate + ADP. Its pathway is amino-acid biosynthesis; L-arginine biosynthesis; N(2)-acetyl-L-ornithine from L-glutamate: step 2/4. In terms of biological role, catalyzes the ATP-dependent phosphorylation of N-acetyl-L-glutamate. This chain is Acetylglutamate kinase, found in Azobacteroides pseudotrichonymphae genomovar. CFP2.